Here is a 103-residue protein sequence, read N- to C-terminus: DNA-directed RNA polymerase subunit omega (103 aa).

Belongs to the RNA polymerase subunit omega family. In terms of assembly, the RNAP catalytic core consists of 2 alpha, 1 beta, 1 beta' and 1 omega subunit. When a sigma factor is associated with the core the holoenzyme is formed, which can initiate transcription.

It carries out the reaction RNA(n) + a ribonucleoside 5'-triphosphate = RNA(n+1) + diphosphate. In terms of biological role, promotes RNA polymerase assembly. Latches the N- and C-terminal regions of the beta' subunit thereby facilitating its interaction with the beta and alpha subunits. In Streptococcus agalactiae serotype III (strain NEM316), this protein is DNA-directed RNA polymerase subunit omega.